A 202-amino-acid chain; its full sequence is Xanthine phosphoribosyltransferase (202 aa).

Xanthine-binding residues include L20 and N27. 128 to 132 (ASGGT) provides a ligand contact to 5-phospho-alpha-D-ribose 1-diphosphate. Residue K156 coordinates xanthine.

It belongs to the purine/pyrimidine phosphoribosyltransferase family. Xpt subfamily. In terms of assembly, homodimer.

Its subcellular location is the cytoplasm. The enzyme catalyses XMP + diphosphate = xanthine + 5-phospho-alpha-D-ribose 1-diphosphate. Its pathway is purine metabolism; XMP biosynthesis via salvage pathway; XMP from xanthine: step 1/1. Converts the preformed base xanthine, a product of nucleic acid breakdown, to xanthosine 5'-monophosphate (XMP), so it can be reused for RNA or DNA synthesis. The sequence is that of Xanthine phosphoribosyltransferase from Deinococcus geothermalis (strain DSM 11300 / CIP 105573 / AG-3a).